A 126-amino-acid chain; its full sequence is Small ribosomal subunit protein uS13 (126 aa).

The interval 98-126 is disordered; the sequence is PLRGQSTKNNARTRKGKKKTVANKKKATK. Residues 108 to 126 are compositionally biased toward basic residues; it reads ARTRKGKKKTVANKKKATK.

The protein belongs to the universal ribosomal protein uS13 family. As to quaternary structure, part of the 30S ribosomal subunit. Forms a loose heterodimer with protein S19. Forms two bridges to the 50S subunit in the 70S ribosome.

Functionally, located at the top of the head of the 30S subunit, it contacts several helices of the 16S rRNA. In the 70S ribosome it contacts the 23S rRNA (bridge B1a) and protein L5 of the 50S subunit (bridge B1b), connecting the 2 subunits; these bridges are implicated in subunit movement. Contacts the tRNAs in the A and P-sites. The chain is Small ribosomal subunit protein uS13 from Parabacteroides distasonis (strain ATCC 8503 / DSM 20701 / CIP 104284 / JCM 5825 / NCTC 11152).